We begin with the raw amino-acid sequence, 201 residues long: Adenylyl-sulfate kinase (201 aa).

35-42 (GLSGSGKS) serves as a coordination point for ATP. Catalysis depends on S109, which acts as the Phosphoserine intermediate.

The protein belongs to the APS kinase family.

The catalysed reaction is adenosine 5'-phosphosulfate + ATP = 3'-phosphoadenylyl sulfate + ADP + H(+). The protein operates within sulfur metabolism; hydrogen sulfide biosynthesis; sulfite from sulfate: step 2/3. Its function is as follows. Catalyzes the synthesis of activated sulfate. This is Adenylyl-sulfate kinase from Salmonella paratyphi C (strain RKS4594).